A 302-amino-acid polypeptide reads, in one-letter code: MASLKDLRDRIASVKATQKITKAMQMVAAAKLHRAQEAVEAGRSYTQRMDALVTNISKDVDLVDAPLLMRGTGNDHVHLLVVCTAERGLCGAFNTQIARLAREHIQKLHAAGKTVKILTVGKKGADILLRDFKSLMIDHVDLRSVKKIGFAEAAKISKQLIDLFNEGAFDVCTLFYSRFVSVITQRPMALSLIPAGQNPVDEGQDFVDQAKSREVSQSAVYEYEPDVASLLNDLIPRHISVQIFQALLENVAGEMGAKMSAMDNASRNAGEMINKLTVTYNRQRQAQITTELIEIIAGAEAL.

Belongs to the ATPase gamma chain family. F-type ATPases have 2 components, CF(1) - the catalytic core - and CF(0) - the membrane proton channel. CF(1) has five subunits: alpha(3), beta(3), gamma(1), delta(1), epsilon(1). CF(0) has three main subunits: a, b and c.

It is found in the cell inner membrane. Its function is as follows. Produces ATP from ADP in the presence of a proton gradient across the membrane. The gamma chain is believed to be important in regulating ATPase activity and the flow of protons through the CF(0) complex. This chain is ATP synthase gamma chain, found in Bartonella bacilliformis (strain ATCC 35685 / KC583 / Herrer 020/F12,63).